The primary structure comprises 240 residues: 3-deoxy-D-manno-octulosonic acid kinase (240 aa).

The active site involves Asp170.

This sequence belongs to the protein kinase superfamily. KdkA/RfaP family.

It is found in the cell inner membrane. The enzyme catalyses an alpha-Kdo-(2-&gt;6)-lipid IVA + ATP = a 4-O-phospho-alpha-Kdo-(2-&gt;6)-lipid IVA + ADP + H(+). It functions in the pathway bacterial outer membrane biogenesis; LPS core biosynthesis. Functionally, catalyzes the ATP-dependent phosphorylation of the 3-deoxy-D-manno-octulosonic acid (Kdo) residue in Kdo-lipid IV(A) at the 4-OH position. The sequence is that of 3-deoxy-D-manno-octulosonic acid kinase from Actinobacillus succinogenes (strain ATCC 55618 / DSM 22257 / CCUG 43843 / 130Z).